We begin with the raw amino-acid sequence, 246 residues long: Small ribosomal subunit protein uS2 (246 aa).

This sequence belongs to the universal ribosomal protein uS2 family.

The sequence is that of Small ribosomal subunit protein uS2 from Helicobacter acinonychis (strain Sheeba).